We begin with the raw amino-acid sequence, 276 residues long: Small ribosomal subunit protein uS3 (276 aa).

Positions isoleucine 38–lysine 106 constitute a KH type-2 domain. Residues asparagine 216–glycine 228 show a composition bias toward low complexity. The tract at residues asparagine 216–alanine 276 is disordered. Residues glycine 229–glycine 245 show a composition bias toward basic and acidic residues. Residues proline 254–alanine 269 show a composition bias toward low complexity.

It belongs to the universal ribosomal protein uS3 family. In terms of assembly, part of the 30S ribosomal subunit. Forms a tight complex with proteins S10 and S14.

Binds the lower part of the 30S subunit head. Binds mRNA in the 70S ribosome, positioning it for translation. This Streptomyces griseus subsp. griseus (strain JCM 4626 / CBS 651.72 / NBRC 13350 / KCC S-0626 / ISP 5235) protein is Small ribosomal subunit protein uS3.